Consider the following 565-residue polypeptide: NAD-dependent malic enzyme (565 aa).

Tyrosine 104 functions as the Proton donor in the catalytic mechanism. Arginine 157 serves as a coordination point for NAD(+). Lysine 175 (proton acceptor) is an active-site residue. Residues glutamate 246, aspartate 247, and aspartate 270 each contribute to the a divalent metal cation site. Residues aspartate 270 and asparagine 418 each coordinate NAD(+).

This sequence belongs to the malic enzymes family. Homotetramer. It depends on Mg(2+) as a cofactor. Mn(2+) is required as a cofactor.

It carries out the reaction (S)-malate + NAD(+) = pyruvate + CO2 + NADH. The enzyme catalyses oxaloacetate + H(+) = pyruvate + CO2. This Salmonella dublin (strain CT_02021853) protein is NAD-dependent malic enzyme.